The chain runs to 222 residues: DNA mismatch repair protein MutH (222 aa).

This sequence belongs to the MutH family.

The protein resides in the cytoplasm. Its function is as follows. Sequence-specific endonuclease that cleaves unmethylated GATC sequences. It is involved in DNA mismatch repair. In Pasteurella multocida (strain Pm70), this protein is DNA mismatch repair protein MutH.